We begin with the raw amino-acid sequence, 138 residues long: Fusaristatin A biosynthesis cluster protein FGSG_08206 (138 aa).

In terms of domain architecture, Stress-response A/B barrel spans V33 to F130.

It participates in secondary metabolite biosynthesis. Its function is as follows. Part of the gene cluster that mediates the biosynthesis of the lipopeptide fusaristatin A. Fusaristatin A consists of a polyketide chain linked to three amino acid residues glutamine (Gln), dehydroalanine (dehydro-Ala), and beta-aminoisobutyric acid. The biosynthesis starts with formation of a linear polyketide chain by the highly reducing polyketide synthase PKS6. The gene cluster does not contain an acyl-CoA ligase or an acyl-transferase, and it is therefore predicted that the polyketide is transferred directly to the nonribosomal peptide synthetase NRPS7. Modules 1-3 from NRPS7 incorporate dehydro-Ala, Gln, and beta-aminoisobutyric acid in the compound, which is released by cyclization. The beta-aminoisobutyric acid units are most likely not freely available to the NRPS, but can be synthesized from thymine, which requires a dehydrogenase, a monooxygenase, and an aminotransferase. The fusaristatin A cluster contains a cytochrome P450 monooxygenase (FGSG_08207) and an aminotransferase (FGSG_17085), which theoretically can perform two of the enzymatic steps. The enzymes may however also be involved in biosynthesis of dehydroalanine or modification of the polyketide. The dehydro-Ala residue can be a result of cyclization, where serine is dehydrated. The last gene of the cluster encodes a protein with an A/B barrel domain found in variable enzymes, which hampers functional prediction. This Gibberella zeae (strain ATCC MYA-4620 / CBS 123657 / FGSC 9075 / NRRL 31084 / PH-1) (Wheat head blight fungus) protein is Fusaristatin A biosynthesis cluster protein FGSG_08206.